A 727-amino-acid polypeptide reads, in one-letter code: DNA ligase (727 aa).

NAD(+) is bound by residues 71–75 (DGEFD), 120–121 (SL), and glutamate 150. Lysine 152 (N6-AMP-lysine intermediate) is an active-site residue. Residues arginine 173, glutamate 213, lysine 329, and lysine 353 each contribute to the NAD(+) site. Positions 447, 450, 466, and 472 each coordinate Zn(2+). The region spanning 636 to 725 (SIERHLTGLS…PEAAAEAALP (90 aa)) is the BRCT domain.

Belongs to the NAD-dependent DNA ligase family. LigA subfamily. It depends on Mg(2+) as a cofactor. Mn(2+) serves as cofactor.

The enzyme catalyses NAD(+) + (deoxyribonucleotide)n-3'-hydroxyl + 5'-phospho-(deoxyribonucleotide)m = (deoxyribonucleotide)n+m + AMP + beta-nicotinamide D-nucleotide.. In terms of biological role, DNA ligase that catalyzes the formation of phosphodiester linkages between 5'-phosphoryl and 3'-hydroxyl groups in double-stranded DNA using NAD as a coenzyme and as the energy source for the reaction. It is essential for DNA replication and repair of damaged DNA. In Saccharopolyspora erythraea (strain ATCC 11635 / DSM 40517 / JCM 4748 / NBRC 13426 / NCIMB 8594 / NRRL 2338), this protein is DNA ligase.